Reading from the N-terminus, the 237-residue chain is Undecaprenyl-diphosphatase (237 aa).

7 helical membrane passes run 38 to 58 (QTAVLHLGTLVSVVLFALDGI), 65 to 85 (WRIILNLIVSTIPAGVFGVLF), 92 to 112 (LFSSPRFLPLFFSATALILMF), 126 to 146 (MSFLDALLVGIAQLFALFPGI), 166 to 186 (ALQYSFLMSIPVVLGAGILGL), 191 to 211 (VTILAPIFAFLSGLFALYVLS), and 217 to 237 (GKIWQFSYYCLFVAILSYLAG).

The protein belongs to the UppP family.

Its subcellular location is the cell inner membrane. The catalysed reaction is di-trans,octa-cis-undecaprenyl diphosphate + H2O = di-trans,octa-cis-undecaprenyl phosphate + phosphate + H(+). Its function is as follows. Catalyzes the dephosphorylation of undecaprenyl diphosphate (UPP). Confers resistance to bacitracin. The polypeptide is Undecaprenyl-diphosphatase (Thermotoga maritima (strain ATCC 43589 / DSM 3109 / JCM 10099 / NBRC 100826 / MSB8)).